The primary structure comprises 452 residues: tRNA modification GTPase MnmE (452 aa).

Positions 21, 78, and 118 each coordinate (6S)-5-formyl-5,6,7,8-tetrahydrofolate. The region spanning 214–375 is the TrmE-type G domain; that stretch reads GMKVVIAGRP…LREHLKQSMG (162 aa). N224 is a K(+) binding site. GTP is bound by residues 224 to 229, 243 to 249, 268 to 271, and 333 to 336; these read NAGKSS, TDIAGTT, DTAG, and NKAD. S228 provides a ligand contact to Mg(2+). K(+)-binding residues include T243, I245, and T248. T249 contacts Mg(2+). K452 provides a ligand contact to (6S)-5-formyl-5,6,7,8-tetrahydrofolate.

Belongs to the TRAFAC class TrmE-Era-EngA-EngB-Septin-like GTPase superfamily. TrmE GTPase family. Homodimer. Heterotetramer of two MnmE and two MnmG subunits. Requires K(+) as cofactor.

The protein localises to the cytoplasm. In terms of biological role, exhibits a very high intrinsic GTPase hydrolysis rate. Involved in the addition of a carboxymethylaminomethyl (cmnm) group at the wobble position (U34) of certain tRNAs, forming tRNA-cmnm(5)s(2)U34. The polypeptide is tRNA modification GTPase MnmE (Pasteurella multocida (strain Pm70)).